A 69-amino-acid polypeptide reads, in one-letter code: uncharacterized protein (69 aa).

This is an uncharacterized protein from Bacillus subtilis (strain 168).